A 101-amino-acid polypeptide reads, in one-letter code: Small ribosomal subunit protein bS6 (101 aa).

Belongs to the bacterial ribosomal protein bS6 family.

Functionally, binds together with bS18 to 16S ribosomal RNA. The polypeptide is Small ribosomal subunit protein bS6 (Arthrobacter sp. (strain FB24)).